The following is a 541-amino-acid chain: 1'-carboxy-chondrochloren decarboxylase (541 aa).

Residues 39–226 (TTHRIPAIIS…TRMTIWLAPR (188 aa)) enclose the FAD-binding PCMH-type domain.

The enzyme catalyses 1'-carboxy-chondrochloren A + FAD + 2 H(+) = chondrochloren A + FADH2 + CO2. It carries out the reaction 1'-carboxy-chondrochloren B + FAD + 2 H(+) = chondrochloren B + FADH2 + CO2. The protein operates within antibiotic biosynthesis. Activity is not affected by the addition of EDTA or/and EGTA chelators or in the presence of external metals like Zn(2+), Mg(2+), Mn(2+) and Fe(2+). Activity is inhibited under low oxygen conditions. Oxidative decarboxylase involved in the biosynthesis of the antibiotics chondrochloren A and chondrochloren B. Catalyzes the decarboxylation of biologically inactive pre-chondrochloren A and pre-chondrochloren B to yield mature chondrochloren A and chondrochloren B, respectively. Cannot decarboxylate free L-tyrosine, 3-chloro-tyrosine or a number of chlorinated and non-chlorinated analog substrates containing variable N-acyl chains. This is 1'-carboxy-chondrochloren decarboxylase from Chondromyces crocatus.